The primary structure comprises 391 residues: Phosphoglycerate kinase (391 aa).

Substrate-binding positions include 23–25, arginine 38, 61–64, arginine 117, and arginine 150; these read DFN and HLGK. Residues lysine 201, glycine 291, glutamate 322, and 348–351 contribute to the ATP site; that span reads GGDS.

The protein belongs to the phosphoglycerate kinase family. Monomer.

Its subcellular location is the cytoplasm. The catalysed reaction is (2R)-3-phosphoglycerate + ATP = (2R)-3-phospho-glyceroyl phosphate + ADP. It participates in carbohydrate degradation; glycolysis; pyruvate from D-glyceraldehyde 3-phosphate: step 2/5. This is Phosphoglycerate kinase from Clostridium beijerinckii (strain ATCC 51743 / NCIMB 8052) (Clostridium acetobutylicum).